A 148-amino-acid chain; its full sequence is UPF0260 protein PM0539 (148 aa).

The protein belongs to the UPF0260 family.

This Pasteurella multocida (strain Pm70) protein is UPF0260 protein PM0539.